The primary structure comprises 181 residues: Small ribosomal subunit protein uS4 (181 aa).

An S4 RNA-binding domain is found at 104 to 166 (RRLQTIVYKK…VTSSFKSRPP (63 aa)).

This sequence belongs to the universal ribosomal protein uS4 family. As to quaternary structure, part of the 30S ribosomal subunit. Contacts protein S5. The interaction surface between S4 and S5 is involved in control of translational fidelity.

In terms of biological role, one of the primary rRNA binding proteins, it binds directly to 16S rRNA where it nucleates assembly of the body of the 30S subunit. Functionally, with S5 and S12 plays an important role in translational accuracy. The chain is Small ribosomal subunit protein uS4 from Saccharolobus islandicus (strain Y.N.15.51 / Yellowstone #2) (Sulfolobus islandicus).